We begin with the raw amino-acid sequence, 291 residues long: Protease HtpX (291 aa).

2 helical membrane passes run 4–24 (IVIF…LLTC) and 37–57 (IISG…SKFI). H139 serves as a coordination point for Zn(2+). E140 is an active-site residue. Zn(2+) is bound at residue H143. The next 2 helical transmembrane spans lie at 147-167 (GDMV…IFIS) and 195-215 (IVST…VLWF). Position 220 (E220) interacts with Zn(2+).

This sequence belongs to the peptidase M48B family. It depends on Zn(2+) as a cofactor.

It is found in the cell membrane. The chain is Protease HtpX from Baumannia cicadellinicola subsp. Homalodisca coagulata.